A 326-amino-acid chain; its full sequence is MSSTDTLSGQVAAADAEILLAQPRGFCAGVDRAIEIVERAIAMHGAPIYVRHEIVHNKYVVEDLKKKGAIFVEELEEVPSGNTVIFSAHGVSKAVRDEAAVRGLRIYDATCPLVTKVHVEVAKMRQEGVDIVMIGHKGHPEVEGTMGQVERGMHLVESVEDVRRLELPDPERVALVTQTTLSVDDAAEIIGALKAKFPAIREPKKQDICYATQNRQDAVKFMAPQCDVVIVVGSPNSSNSSRLREVAEKRGVAAYMVDAPEQIDPAWVAGKRRIGVTAGASAPEVLAQAVIARLRELGVTNVRALEGIEENVSFPLPRGLNLSSAA.

Cysteine 27 is a [4Fe-4S] cluster binding site. (2E)-4-hydroxy-3-methylbut-2-enyl diphosphate-binding residues include histidine 56 and histidine 89. Dimethylallyl diphosphate contacts are provided by histidine 56 and histidine 89. Residues histidine 56 and histidine 89 each coordinate isopentenyl diphosphate. Cysteine 111 contributes to the [4Fe-4S] cluster binding site. Residue histidine 139 coordinates (2E)-4-hydroxy-3-methylbut-2-enyl diphosphate. Histidine 139 is a binding site for dimethylallyl diphosphate. Residue histidine 139 participates in isopentenyl diphosphate binding. Glutamate 141 serves as the catalytic Proton donor. Threonine 179 is a binding site for (2E)-4-hydroxy-3-methylbut-2-enyl diphosphate. Cysteine 209 contributes to the [4Fe-4S] cluster binding site. Serine 237, serine 238, asparagine 239, and serine 281 together coordinate (2E)-4-hydroxy-3-methylbut-2-enyl diphosphate. Positions 237, 238, 239, and 281 each coordinate dimethylallyl diphosphate. Isopentenyl diphosphate is bound by residues serine 237, serine 238, asparagine 239, and serine 281.

It belongs to the IspH family. It depends on [4Fe-4S] cluster as a cofactor.

The enzyme catalyses isopentenyl diphosphate + 2 oxidized [2Fe-2S]-[ferredoxin] + H2O = (2E)-4-hydroxy-3-methylbut-2-enyl diphosphate + 2 reduced [2Fe-2S]-[ferredoxin] + 2 H(+). The catalysed reaction is dimethylallyl diphosphate + 2 oxidized [2Fe-2S]-[ferredoxin] + H2O = (2E)-4-hydroxy-3-methylbut-2-enyl diphosphate + 2 reduced [2Fe-2S]-[ferredoxin] + 2 H(+). Its pathway is isoprenoid biosynthesis; dimethylallyl diphosphate biosynthesis; dimethylallyl diphosphate from (2E)-4-hydroxy-3-methylbutenyl diphosphate: step 1/1. It participates in isoprenoid biosynthesis; isopentenyl diphosphate biosynthesis via DXP pathway; isopentenyl diphosphate from 1-deoxy-D-xylulose 5-phosphate: step 6/6. Catalyzes the conversion of 1-hydroxy-2-methyl-2-(E)-butenyl 4-diphosphate (HMBPP) into a mixture of isopentenyl diphosphate (IPP) and dimethylallyl diphosphate (DMAPP). Acts in the terminal step of the DOXP/MEP pathway for isoprenoid precursor biosynthesis. In Burkholderia pseudomallei (strain K96243), this protein is 4-hydroxy-3-methylbut-2-enyl diphosphate reductase 1.